We begin with the raw amino-acid sequence, 197 residues long: SERTA domain-containing protein 3 (197 aa).

The tract at residues 1 to 23 (MGGLKRKHSDLEEEEEEEKWDWS) is disordered. In terms of domain architecture, SERTA spans 27–74 (LRSYQQALLRISLDKVQRSLGPRAPSLRRHVLIHNTLQQLQAAIRLAP).

Interacts with RPA2.

The protein resides in the nucleus. Its subcellular location is the nucleolus. Antiviral interferon-stimulated protein that plays a role in innate immunity and in the suppression of viruses through different mechanisms. Plays a role in the late phase response of TLR-induced immune effector expression. Strong transcriptional coactivator. The protein is SERTA domain-containing protein 3 (Sertad3) of Mus musculus (Mouse).